A 626-amino-acid chain; its full sequence is Leucine-rich repeat and fibronectin type-III domain-containing protein 3 (626 aa).

Residues 1 to 16 (MAVLPLLLCLLPLAPA) form the signal peptide. Residues 17 to 539 (SSPPQPATSS…PHAPFLGGTM (523 aa)) are Extracellular-facing. Residues 19-59 (PPQPATSSPCPRRCRCQTQSLPLSVLCPGAGLLFVPPSLDR) form the LRRNT domain. LRR repeat units lie at residues 84–105 (GLLH…AFAD), 108–129 (ALRA…QLRG), 132–153 (NLRH…ALDD), 157–178 (TLED…ALGR), 181–202 (NVNT…AFSR), and 205–226 (KLAR…PLFS). An LRRCT domain is found at 249 to 295 (NPLHCNCELVWLRRLAREDDLEACASPPALGGRYFWAVGEEEFVCEP). An Ig-like domain is found at 295-382 (PPVVTHRSPP…GEATAAVELT (88 aa)). Residues 308–395 (PAGRPAALRC…PPPPQLANST (88 aa)) form the Fibronectin type-III 1 domain. A disulfide bridge links Cys317 with Cys366. Residues Asn339, Asn348, and Asn393 are each glycosylated (N-linked (GlcNAc...) asparagine). A disordered region spans residues 382 to 423 (TVGPPPPPQLANSTSCDPPRDGEPDALTPPSAASASAKVADT). Positions 406–423 (DALTPPSAASASAKVADT) are enriched in low complexity. A Fibronectin type-III 2 domain is found at 425–523 (APTDRGVQVT…GCARFSTEPA (99 aa)). A helical membrane pass occupies residues 540 to 560 (IIALGGVIVASVLVFIFVLLL). Topologically, residues 561-626 (RYKVHGVQPP…WGPSHEPAGP (66 aa)) are cytoplasmic.

The protein belongs to the LRFN family. Can form heteromeric complexes with LRFN1, LRFN2, LRFN4 and LRFN5. Able to form homomeric complexes across cell junctions, between adjacent cells. Does not interact with DLG4. N-glycosylated. Expressed in brain. Within brain, expressed in hippocampus, cerebellum, olfactory bulb and forebrain (at protein level).

The protein localises to the cell membrane. It is found in the cell projection. The protein resides in the axon. It localises to the dendrite. Its subcellular location is the synapse. The protein localises to the presynaptic cell membrane. It is found in the postsynaptic cell membrane. Functionally, cell adhesion molecule that mediates homophilic cell-cell adhesion in a Ca(2+)-independent manner. Promotes neurite outgrowth in hippocampal neurons. The sequence is that of Leucine-rich repeat and fibronectin type-III domain-containing protein 3 from Rattus norvegicus (Rat).